The chain runs to 453 residues: GTPase Der (453 aa).

EngA-type G domains follow at residues 3–178 (PKIA…PNNE) and 190–363 (LKLA…LECS). GTP-binding positions include 9–16 (GRPNVGKS), 57–61 (DTGGV), 130–133 (NKVD), 196–203 (GRPNAGKS), 243–247 (DTAGI), and 308–311 (NKTD). In terms of domain architecture, KH-like spans 364-448 (TRINTGVLNR…PIRIRLRSSH (85 aa)).

It belongs to the TRAFAC class TrmE-Era-EngA-EngB-Septin-like GTPase superfamily. EngA (Der) GTPase family. Associates with the 50S ribosomal subunit.

GTPase that plays an essential role in the late steps of ribosome biogenesis. This is GTPase Der from Lawsonia intracellularis (strain PHE/MN1-00).